The following is a 263-amino-acid chain: Protein TILLER ANGLE CONTROL 1 (263 aa).

The IGT motif motif lies at 55–61; it reads GILAIGT. Positions 243-263 are disordered; the sequence is GKKIHPEQLNGRSNAEGPLTA.

Belongs to the TAC family. In terms of tissue distribution, highly expressed in leaf sheath pulvinus. Expressed in shoot apical meristem and leaves.

Involved in the regulation of leaf growth angle. Promotes horizontal shoot growth. The polypeptide is Protein TILLER ANGLE CONTROL 1 (Zea mays (Maize)).